A 377-amino-acid polypeptide reads, in one-letter code: Alanine racemase (377 aa).

Residue Lys-35 is the Proton acceptor; specific for D-alanine of the active site. The residue at position 35 (Lys-35) is an N6-(pyridoxal phosphate)lysine. Residue Arg-130 participates in substrate binding. The Proton acceptor; specific for L-alanine role is filled by Tyr-260. A substrate-binding site is contributed by Met-312.

This sequence belongs to the alanine racemase family. Requires pyridoxal 5'-phosphate as cofactor.

The catalysed reaction is L-alanine = D-alanine. Its pathway is amino-acid biosynthesis; D-alanine biosynthesis; D-alanine from L-alanine: step 1/1. Functionally, catalyzes the interconversion of L-alanine and D-alanine. May also act on other amino acids. This chain is Alanine racemase (alr), found in Leptothrix cholodnii (strain ATCC 51168 / LMG 8142 / SP-6) (Leptothrix discophora (strain SP-6)).